Reading from the N-terminus, the 729-residue chain is Cullin-6 (729 aa).

The Cullin neddylation domain occupies 659–720; sequence DRKYEIKACI…EQLYIRRSEN (62 aa). A Glycyl lysine isopeptide (Lys-Gly) (interchain with G-Cter in NEDD8) cross-link involves residue lysine 673.

Belongs to the cullin family. As to quaternary structure, probably interacts with skr-3. Neddylated; which enhances the ubiquitination activity of SCF-like complex.

Functionally, probable core component of cullin-based SCF-like E3 ubiquitin-protein ligase complexes which mediate the ubiquitination and subsequent proteasomal degradation of target proteins. The chain is Cullin-6 (cul-6) from Caenorhabditis elegans.